Here is a 239-residue protein sequence, read N- to C-terminus: Ribose-5-phosphate isomerase A (239 aa).

Substrate is bound by residues 40–43 (SGST), 96–99 (DGAD), and 110–113 (KGGG). The Proton acceptor role is filled by E119. K137 provides a ligand contact to substrate.

Belongs to the ribose 5-phosphate isomerase family. As to quaternary structure, homodimer.

The catalysed reaction is aldehydo-D-ribose 5-phosphate = D-ribulose 5-phosphate. The protein operates within carbohydrate degradation; pentose phosphate pathway; D-ribose 5-phosphate from D-ribulose 5-phosphate (non-oxidative stage): step 1/1. Functionally, catalyzes the reversible conversion of ribose-5-phosphate to ribulose 5-phosphate. The protein is Ribose-5-phosphate isomerase A of Methanococcus maripaludis (strain C5 / ATCC BAA-1333).